Here is a 303-residue protein sequence, read N- to C-terminus: MAVTASMVKELREKTGVGMMDCKKALAETGGDMEAAVDWLRKKGMASAQKKSARVAAEGKVTTLSLGSVGVMLEVNAETDFTAKNDNFCTFADTATKLAADNGCTDIDTLKALDYPGTGRNVGDELTNLIATIGENMNLRRIERMEVSSGLVSSYIHAGGKIGVLVALESTASADALQELGKKLAMHVAAAAPQFLNRDSVDSEAMEREKSVLIDQARASGKPDNIIEKMIVGRMDKYYADVCLLEQAYVIDPDHKVQQVVDAAAKELGCPVKVTGYARFQLGEGIEKKEEDFAAEVAKVVQG.

An involved in Mg(2+) ion dislocation from EF-Tu region spans residues 79 to 82 (TDFT).

It belongs to the EF-Ts family.

The protein resides in the cytoplasm. In terms of biological role, associates with the EF-Tu.GDP complex and induces the exchange of GDP to GTP. It remains bound to the aminoacyl-tRNA.EF-Tu.GTP complex up to the GTP hydrolysis stage on the ribosome. The protein is Elongation factor Ts of Magnetococcus marinus (strain ATCC BAA-1437 / JCM 17883 / MC-1).